A 689-amino-acid chain; its full sequence is DNA ligase (689 aa).

Residues 40–44, 89–90, and glutamate 121 contribute to the NAD(+) site; these read DAEYD and SL. Lysine 123 acts as the N6-AMP-lysine intermediate in catalysis. Positions 144, 179, 295, and 319 each coordinate NAD(+). Cysteine 413, cysteine 416, cysteine 431, and cysteine 437 together coordinate Zn(2+). A BRCT domain is found at 610–689; sequence REQSSLTGKI…AEWLTLVRDI (80 aa).

Belongs to the NAD-dependent DNA ligase family. LigA subfamily. Mg(2+) is required as a cofactor. The cofactor is Mn(2+).

The catalysed reaction is NAD(+) + (deoxyribonucleotide)n-3'-hydroxyl + 5'-phospho-(deoxyribonucleotide)m = (deoxyribonucleotide)n+m + AMP + beta-nicotinamide D-nucleotide.. DNA ligase that catalyzes the formation of phosphodiester linkages between 5'-phosphoryl and 3'-hydroxyl groups in double-stranded DNA using NAD as a coenzyme and as the energy source for the reaction. It is essential for DNA replication and repair of damaged DNA. The chain is DNA ligase from Rickettsia bellii (strain RML369-C).